The following is a 130-amino-acid chain: Protein ApaG (130 aa).

Residues 3-127 (RAVTRQIEVL…FSLDSPDIRR (125 aa)) enclose the ApaG domain.

This Afipia carboxidovorans (strain ATCC 49405 / DSM 1227 / KCTC 32145 / OM5) (Oligotropha carboxidovorans) protein is Protein ApaG.